A 201-amino-acid polypeptide reads, in one-letter code: Putative 3-methyladenine DNA glycosylase (201 aa).

It belongs to the DNA glycosylase MPG family.

The sequence is that of Putative 3-methyladenine DNA glycosylase from Clostridium novyi (strain NT).